The primary structure comprises 221 residues: N-(5'-phosphoribosyl)anthranilate isomerase (221 aa).

This sequence belongs to the TrpF family.

It catalyses the reaction N-(5-phospho-beta-D-ribosyl)anthranilate = 1-(2-carboxyphenylamino)-1-deoxy-D-ribulose 5-phosphate. It functions in the pathway amino-acid biosynthesis; L-tryptophan biosynthesis; L-tryptophan from chorismate: step 3/5. This chain is N-(5'-phosphoribosyl)anthranilate isomerase, found in Chlorobaculum parvum (strain DSM 263 / NCIMB 8327) (Chlorobium vibrioforme subsp. thiosulfatophilum).